A 613-amino-acid polypeptide reads, in one-letter code: Proline--tRNA ligase (613 aa).

This sequence belongs to the class-II aminoacyl-tRNA synthetase family. ProS type 1 subfamily. As to quaternary structure, homodimer.

It is found in the cytoplasm. The enzyme catalyses tRNA(Pro) + L-proline + ATP = L-prolyl-tRNA(Pro) + AMP + diphosphate. Its function is as follows. Catalyzes the attachment of proline to tRNA(Pro) in a two-step reaction: proline is first activated by ATP to form Pro-AMP and then transferred to the acceptor end of tRNA(Pro). As ProRS can inadvertently accommodate and process non-cognate amino acids such as alanine and cysteine, to avoid such errors it has two additional distinct editing activities against alanine. One activity is designated as 'pretransfer' editing and involves the tRNA(Pro)-independent hydrolysis of activated Ala-AMP. The other activity is designated 'posttransfer' editing and involves deacylation of mischarged Ala-tRNA(Pro). The misacylated Cys-tRNA(Pro) is not edited by ProRS. This chain is Proline--tRNA ligase, found in Cyanothece sp. (strain PCC 7425 / ATCC 29141).